We begin with the raw amino-acid sequence, 500 residues long: Bifunctional protein GlmU (500 aa).

The pyrophosphorylase stretch occupies residues 1-242 (MPVQTAVVVL…SAKVAGANDR (242 aa)). UDP-N-acetyl-alpha-D-glucosamine contacts are provided by residues 10-13 (LAAG), K24, Q81, and 86-87 (GT). A Mg(2+)-binding site is contributed by D112. Residues G151, E167, N182, and N240 each coordinate UDP-N-acetyl-alpha-D-glucosamine. N240 lines the Mg(2+) pocket. Residues 243–263 (VQLSRLAAELNRRTVENWMRA) are linker. Positions 264-500 (GVTVVDPSTT…KQDLKDGIEQ (237 aa)) are N-acetyltransferase. UDP-N-acetyl-alpha-D-glucosamine is bound by residues R345 and K363. H375 functions as the Proton acceptor in the catalytic mechanism. 2 residues coordinate UDP-N-acetyl-alpha-D-glucosamine: Y378 and N389. Acetyl-CoA contacts are provided by residues A392, 398–399 (NY), S417, and A435. The disordered stretch occupies residues 472-500 (AEAAAAAGLHHSSDLHETEKQDLKDGIEQ). A compositionally biased stretch (basic and acidic residues) spans 482 to 500 (HSSDLHETEKQDLKDGIEQ).

In the N-terminal section; belongs to the N-acetylglucosamine-1-phosphate uridyltransferase family. It in the C-terminal section; belongs to the transferase hexapeptide repeat family. Homotrimer. Mg(2+) serves as cofactor.

The protein localises to the cytoplasm. The enzyme catalyses alpha-D-glucosamine 1-phosphate + acetyl-CoA = N-acetyl-alpha-D-glucosamine 1-phosphate + CoA + H(+). The catalysed reaction is N-acetyl-alpha-D-glucosamine 1-phosphate + UTP + H(+) = UDP-N-acetyl-alpha-D-glucosamine + diphosphate. The protein operates within nucleotide-sugar biosynthesis; UDP-N-acetyl-alpha-D-glucosamine biosynthesis; N-acetyl-alpha-D-glucosamine 1-phosphate from alpha-D-glucosamine 6-phosphate (route II): step 2/2. Its pathway is nucleotide-sugar biosynthesis; UDP-N-acetyl-alpha-D-glucosamine biosynthesis; UDP-N-acetyl-alpha-D-glucosamine from N-acetyl-alpha-D-glucosamine 1-phosphate: step 1/1. It participates in bacterial outer membrane biogenesis; LPS lipid A biosynthesis. In terms of biological role, catalyzes the last two sequential reactions in the de novo biosynthetic pathway for UDP-N-acetylglucosamine (UDP-GlcNAc). The C-terminal domain catalyzes the transfer of acetyl group from acetyl coenzyme A to glucosamine-1-phosphate (GlcN-1-P) to produce N-acetylglucosamine-1-phosphate (GlcNAc-1-P), which is converted into UDP-GlcNAc by the transfer of uridine 5-monophosphate (from uridine 5-triphosphate), a reaction catalyzed by the N-terminal domain. This is Bifunctional protein GlmU from Rhodococcus jostii (strain RHA1).